Here is an 826-residue protein sequence, read N- to C-terminus: MTGAEVETGSQAKPDKKPQEEVAGGAERESEAPLVVRPKVRPQAPATSGARPKTETKSSSRARPKTETQSVSGTRHRMSGARPRSEAQLMSGARPKTDARAVGGARPKTEAKPIPGARPKGDAQAWAHSEFGAEAMPRAERAHLSNSVTWPPVNVGSATVTKSKSLSMNTELASMGSEIFSGTQGQPGIEPWFGPREEANMGSWCYPRPRAREETSNESADENSTMSSFWTREETSIRSWPREEVNTRSRHRAKHQTNARSKPRSKQDPYIDSLSGSEDEASNPFCFWAGENTNDMFRARGRDEANARPKIRTKREDYFEDEDEIYKESWLLPGEEGNRFRRRDKEEPNKTLKNENEKDVKNDETVEQESRLEEEVIIGSWFWAEQETNVEAGASAICDAEPGAEEGAIGGSLFWTEEKPSLGAVARDEVRPESEEEALFGSWFWDRDEACFDPNPTPVYTAKSRYRDPEEDLNLASRPKTWDEVTIEFKPPCHGLGFPSPRPFIIPEGASGNSEEKAKNAELGAEGEEQDSVAQRDLPEPEFPFQYDPSYRSVQEIREHLKARESAQPENWSCTCIQCELRISSAEFEELLLLMDRIRDPFIHEIAKIAMGMRTASQFTRDFIRDSGVVSLIEALMNYPSSRVRTNFLENMVHMAPPYPNLNMIETFICQVCEETLSHSVNSPEQLTGMRMLRHLTITTDYHVLIANYVSGFLALLTTGDARTKFHVLKMLLNLSDNPMVAKKLFSAKALSIFVGLFNIEETNDNIQIVIKMFQNISNIVKSGAMSLLDDDFSLEPLVSAFHEFEELAKQLQIQIDNQNDPEEGQ.

Disordered stretches follow at residues Met1–Trp126, Trp204–Cys286, Glu336–Arg371, and Ile506–Ala534. The segment covering Lys13–Glu31 has biased composition (basic and acidic residues). Residues Ser59–Gly73 are compositionally biased toward polar residues. A compositionally biased stretch (basic and acidic residues) spans Thr231–Thr247. Residues Arg248–Arg264 are compositionally biased toward basic residues. 2 positions are modified to phosphoserine: Ser275 and Ser277.

This sequence belongs to the GPRASP family. As to quaternary structure, interacts with cytoplasmic tails of a variety of G-protein coupled receptors such as muscarinic acetylcholine receptor M1/CHRM1 and calcitonin receptor/CALCR. As to expression, strongly expressed in the brain and the cochlea. Also in lung and muscle tissues. Localized in multiple structures of the cochlea, detected in the spiral ganglion, stria vascularis, spiral ligament, inner and outer hair cells.

Functionally, may play a role in regulation of a variety of G-protein coupled receptors. This chain is G-protein coupled receptor-associated sorting protein 2 (Gprasp2), found in Mus musculus (Mouse).